The chain runs to 504 residues: Maturase K (504 aa).

This sequence belongs to the intron maturase 2 family. MatK subfamily.

It is found in the plastid. Its subcellular location is the chloroplast. In terms of biological role, usually encoded in the trnK tRNA gene intron. Probably assists in splicing its own and other chloroplast group II introns. This chain is Maturase K, found in Gossypium barbadense (Sea Island cotton).